Consider the following 375-residue polypeptide: 3-dehydroquinate synthase (375 aa).

NAD(+)-binding positions include 82–87 (SGETSK), 116–120 (GVVGD), 140–141 (TT), Lys-153, and Lys-162. Zn(2+)-binding residues include Glu-195, His-259, and His-276.

Belongs to the sugar phosphate cyclases superfamily. Dehydroquinate synthase family. It depends on NAD(+) as a cofactor. The cofactor is Co(2+). Requires Zn(2+) as cofactor.

Its subcellular location is the cytoplasm. The enzyme catalyses 7-phospho-2-dehydro-3-deoxy-D-arabino-heptonate = 3-dehydroquinate + phosphate. Its pathway is metabolic intermediate biosynthesis; chorismate biosynthesis; chorismate from D-erythrose 4-phosphate and phosphoenolpyruvate: step 2/7. Its function is as follows. Catalyzes the conversion of 3-deoxy-D-arabino-heptulosonate 7-phosphate (DAHP) to dehydroquinate (DHQ). The chain is 3-dehydroquinate synthase from Rhodopirellula baltica (strain DSM 10527 / NCIMB 13988 / SH1).